Here is a 397-residue protein sequence, read N- to C-terminus: UDP-GlcNAc:betaGal beta-1,3-N-acetylglucosaminyltransferase 7 (397 aa).

Over 1-6 (MSLWKK) the chain is Cytoplasmic. A helical membrane pass occupies residues 7–26 (TLYKSVCLALALLVAVTVFQ). Residues 27 to 397 (RSVTPGQFLQ…LTCSVKFQVL (371 aa)) lie on the Lumenal side of the membrane. 4 N-linked (GlcNAc...) asparagine glycosylation sites follow: asparagine 84, asparagine 90, asparagine 210, and asparagine 387.

Belongs to the glycosyltransferase 31 family. In terms of tissue distribution, strongly expressed in placenta and colon. Moderately expressed in lung, stomach, small intestine and kidney. Very weakly expressed in cerebrum, cerebellum, heart and testis.

Its subcellular location is the golgi apparatus membrane. Its pathway is protein modification; protein glycosylation. In terms of biological role, N-acetyl glucosamine (GlcNAc) transferase that catalyzes the transfer of GlcNAc via a beta1-&gt;3 linkage from UDP-GlcNAc to the non-reducing terminal galactose (Gal) in the linearly growing chain of N- and O-linked keratan sulfate proteoglycans. Cooperates with B4GALT4 galactosyltransferase and CHST6 and CHST1 sulfotransferases to construct and elongate mono- and disulfated disaccharide units [-&gt;3Galbeta1-&gt;4(6-sulfoGlcNAcbeta)1-&gt;] and [-&gt;3(6-sulfoGalbeta)1-&gt;4(6-sulfoGlcNAcbeta)1-&gt;] within keratan sulfate polymer. Involved in biosynthesis of N-linked keratan sulfate proteoglycans in cornea, with an impact on proteoglycan fibril organization and corneal transparency. May play a role in the maintenance of tissue architecture by suppressing cellular motility and invasion. The polypeptide is UDP-GlcNAc:betaGal beta-1,3-N-acetylglucosaminyltransferase 7 (B3gnt7) (Mus musculus (Mouse)).